A 407-amino-acid polypeptide reads, in one-letter code: Zinc finger protein 552 (407 aa).

A KRAB domain is found at 14–90; the sequence is VTFEDVAVKF…PMAGVSPKKA (77 aa). The C2H2-type 1 zinc finger occupies 91–113; that stretch reads HPCEMCGPILGDILHVADHQGTH. The segment at 119 to 141 adopts a C2H2-type 2; degenerate zinc-finger fold; that stretch reads HRCEAWGNKLYDSGNFHQHQNEH. Glycyl lysine isopeptide (Lys-Gly) (interchain with G-Cter in SUMO2) cross-links involve residues Lys-176 and Lys-198. The C2H2-type 3; degenerate zinc finger occupies 212–234; that stretch reads YSCGGCMKHFSTKDILSQHERLL. The C2H2-type 4; degenerate zinc-finger motif lies at 244-262; the sequence is ECGKSSSKYDSFSNHQGVH. Residues Lys-251 and Lys-266 each participate in a glycyl lysine isopeptide (Lys-Gly) (interchain with G-Cter in SUMO2) cross-link. 5 consecutive C2H2-type zinc fingers follow at residues 268 to 290, 296 to 318, 324 to 346, 352 to 374, and 380 to 402; these read YTCGICGKLFNSKSHLLVHQRIH, YECEVCQKFFRHKYHLIAHQRVH, YECSDCGKSFTHSSTFRVHKRVH, YECSECGKSFAESSSLTKHRRVH, and YGCSECEKKFRQISSLRHHQRVH. A Glycyl lysine isopeptide (Lys-Gly) (interchain with G-Cter in SUMO2) cross-link involves residue Lys-308.

It belongs to the krueppel C2H2-type zinc-finger protein family.

It localises to the nucleus. May be involved in transcriptional regulation. The protein is Zinc finger protein 552 (ZNF552) of Homo sapiens (Human).